The chain runs to 362 residues: Heme A synthase (362 aa).

5 helical membrane passes run 10 to 30, 102 to 122, 128 to 148, 159 to 179, and 198 to 218; these read LAAI…MVLV, VIGM…AVSG, LWLI…MVAS, VRLA…VWTL, and AWGL…VAGL. A heme-binding site is contributed by H262. Transmembrane regions (helical) follow at residues 266–286, 297–317, and 318–338; these read AYTL…AGAG, LAAI…VVPI, and SLAL…VLQA. H323 serves as a coordination point for heme.

It belongs to the COX15/CtaA family. Type 2 subfamily. As to quaternary structure, interacts with CtaB. It depends on heme b as a cofactor.

The protein resides in the cell membrane. The enzyme catalyses Fe(II)-heme o + 2 A + H2O = Fe(II)-heme a + 2 AH2. The protein operates within porphyrin-containing compound metabolism; heme A biosynthesis; heme A from heme O: step 1/1. Catalyzes the conversion of heme O to heme A by two successive hydroxylations of the methyl group at C8. The first hydroxylation forms heme I, the second hydroxylation results in an unstable dihydroxymethyl group, which spontaneously dehydrates, resulting in the formyl group of heme A. The protein is Heme A synthase of Bradyrhizobium sp. (strain BTAi1 / ATCC BAA-1182).